We begin with the raw amino-acid sequence, 586 residues long: Potassium-transporting ATPase potassium-binding subunit (586 aa).

A run of 12 helical transmembrane segments spans residues 11-31, 67-87, 136-156, 179-199, 279-299, 306-326, 351-371, 381-401, 403-423, 442-462, 507-527, and 551-571; these read LFLVLLLAVVKPMGAFMAKVF, AVAVLLFNLALFVSLFAILML, GLAVHNFVSAATGIAVAIAVI, LYVLLPISLIGALILVSQGVI, VEIFLILLIPFALTSTFGVMV, WAILGVMLLMMAISFAVLQGV, FGLAGASLFTVATTGTSCGAV, LGGMIPLGLILLGEIAPGGVG, GLYTMLAFVVIAVFVAGLMIG, IITVLAAGVVVLILSGVAMIT, ILGSLAMLVGRFAPAVAVLAM, and FALWLMLVILIVGALTFFPAL.

Belongs to the KdpA family. In terms of assembly, the system is composed of three essential subunits: KdpA, KdpB and KdpC.

The protein resides in the cell inner membrane. Part of the high-affinity ATP-driven potassium transport (or Kdp) system, which catalyzes the hydrolysis of ATP coupled with the electrogenic transport of potassium into the cytoplasm. This subunit binds the periplasmic potassium ions and delivers the ions to the membrane domain of KdpB through an intramembrane tunnel. In Geobacter metallireducens (strain ATCC 53774 / DSM 7210 / GS-15), this protein is Potassium-transporting ATPase potassium-binding subunit.